We begin with the raw amino-acid sequence, 205 residues long: Peptidyl-tRNA hydrolase (205 aa).

Tyr-14 is a tRNA binding site. Catalysis depends on His-19, which acts as the Proton acceptor. TRNA contacts are provided by Tyr-64, Asn-66, and Asn-112.

It belongs to the PTH family. In terms of assembly, monomer.

Its subcellular location is the cytoplasm. It catalyses the reaction an N-acyl-L-alpha-aminoacyl-tRNA + H2O = an N-acyl-L-amino acid + a tRNA + H(+). In terms of biological role, hydrolyzes ribosome-free peptidyl-tRNAs (with 1 or more amino acids incorporated), which drop off the ribosome during protein synthesis, or as a result of ribosome stalling. Catalyzes the release of premature peptidyl moieties from peptidyl-tRNA molecules trapped in stalled 50S ribosomal subunits, and thus maintains levels of free tRNAs and 50S ribosomes. This Parvibaculum lavamentivorans (strain DS-1 / DSM 13023 / NCIMB 13966) protein is Peptidyl-tRNA hydrolase.